The chain runs to 89 residues: MANIKSAKKRAKQTVVRNERNTGQRSMLRTAVKKVIKALDANDAAGAEAAFAVAQPILDRFSARGLIHKNKAARHKSRLTARIKAIKAA.

Basic residues predominate over residues M1–K12. The disordered stretch occupies residues M1–Q24.

This sequence belongs to the bacterial ribosomal protein bS20 family.

Binds directly to 16S ribosomal RNA. The polypeptide is Small ribosomal subunit protein bS20 (Xanthomonas campestris pv. campestris (strain 8004)).